A 389-amino-acid polypeptide reads, in one-letter code: S-adenosylmethionine synthase (389 aa).

Residue His17 coordinates ATP. Mg(2+) is bound at residue Asp19. Position 45 (Glu45) interacts with K(+). L-methionine is bound by residues Glu58 and Gln101. The flexible loop stretch occupies residues 101–111 (QSPDIGQGVDV). ATP contacts are provided by residues 160-162 (DGK), 226-227 (RF), Asp235, 241-242 (RK), Ala258, and Lys262. Residue Asp235 participates in L-methionine binding. Lys266 contacts L-methionine.

The protein belongs to the AdoMet synthase family. In terms of assembly, homotetramer; dimer of dimers. It depends on Mg(2+) as a cofactor. K(+) serves as cofactor.

The protein localises to the cytoplasm. The catalysed reaction is L-methionine + ATP + H2O = S-adenosyl-L-methionine + phosphate + diphosphate. It participates in amino-acid biosynthesis; S-adenosyl-L-methionine biosynthesis; S-adenosyl-L-methionine from L-methionine: step 1/1. Functionally, catalyzes the formation of S-adenosylmethionine (AdoMet) from methionine and ATP. The overall synthetic reaction is composed of two sequential steps, AdoMet formation and the subsequent tripolyphosphate hydrolysis which occurs prior to release of AdoMet from the enzyme. This chain is S-adenosylmethionine synthase, found in Anaeromyxobacter sp. (strain Fw109-5).